Reading from the N-terminus, the 190-residue chain is Allergen Alt a 2 (190 aa).

This chain is Allergen Alt a 2 (ALTA2), found in Alternaria alternata (Alternaria rot fungus).